Reading from the N-terminus, the 127-residue chain is Aspartate 1-decarboxylase (127 aa).

Ser-25 serves as the catalytic Schiff-base intermediate with substrate; via pyruvic acid. Position 25 is a pyruvic acid (Ser) (Ser-25). Thr-57 lines the substrate pocket. Tyr-58 acts as the Proton donor in catalysis. Residue 73–75 (GAA) participates in substrate binding.

Belongs to the PanD family. As to quaternary structure, heterooctamer of four alpha and four beta subunits. The cofactor is pyruvate. Post-translationally, is synthesized initially as an inactive proenzyme, which is activated by self-cleavage at a specific serine bond to produce a beta-subunit with a hydroxyl group at its C-terminus and an alpha-subunit with a pyruvoyl group at its N-terminus.

It is found in the cytoplasm. It carries out the reaction L-aspartate + H(+) = beta-alanine + CO2. The protein operates within cofactor biosynthesis; (R)-pantothenate biosynthesis; beta-alanine from L-aspartate: step 1/1. Its function is as follows. Catalyzes the pyruvoyl-dependent decarboxylation of aspartate to produce beta-alanine. In Listeria monocytogenes serotype 4b (strain CLIP80459), this protein is Aspartate 1-decarboxylase.